A 395-amino-acid chain; its full sequence is S-adenosylmethionine synthase (395 aa).

His18 contributes to the ATP binding site. A Mg(2+)-binding site is contributed by Asp20. Glu46 serves as a coordination point for K(+). The L-methionine site is built by Glu59 and Gln103. The segment at 103–113 is flexible loop; sequence QSADIAVGVDS. ATP contacts are provided by residues 170–172, 235–236, Asp244, 250–251, Ala267, and Lys271; these read DAK, KF, and RK. An L-methionine-binding site is contributed by Asp244. Residue Lys275 coordinates L-methionine.

The protein belongs to the AdoMet synthase family. Homotetramer; dimer of dimers. It depends on Mg(2+) as a cofactor. K(+) serves as cofactor.

It localises to the cytoplasm. It carries out the reaction L-methionine + ATP + H2O = S-adenosyl-L-methionine + phosphate + diphosphate. It functions in the pathway amino-acid biosynthesis; S-adenosyl-L-methionine biosynthesis; S-adenosyl-L-methionine from L-methionine: step 1/1. Functionally, catalyzes the formation of S-adenosylmethionine (AdoMet) from methionine and ATP. The overall synthetic reaction is composed of two sequential steps, AdoMet formation and the subsequent tripolyphosphate hydrolysis which occurs prior to release of AdoMet from the enzyme. This Granulibacter bethesdensis (strain ATCC BAA-1260 / CGDNIH1) protein is S-adenosylmethionine synthase.